The primary structure comprises 597 residues: Probable potassium transport system protein Kup 1 (597 aa).

Helical transmembrane passes span 23–43 (GAWL…DSVL), 72–92 (LTMM…SRGT), 98–118 (VFGS…VVAI), 143–163 (ATGL…EALY), 174–194 (IYFT…GQGA), 226–246 (AVVL…TGAF), 273–293 (LYIP…LLLF), 303–323 (YGLA…IYLW), 329–349 (FGAV…FAAS), and 353–373 (FLHG…IMYT).

Belongs to the HAK/KUP transporter (TC 2.A.72) family.

The protein localises to the cell membrane. It carries out the reaction K(+)(in) + H(+)(in) = K(+)(out) + H(+)(out). In terms of biological role, transport of potassium into the cell. Likely operates as a K(+):H(+) symporter. This is Probable potassium transport system protein Kup 1 (kup1) from Bifidobacterium longum (strain NCC 2705).